The primary structure comprises 126 residues: MFKFVMVFAVLGLAAAVAPVSRSDDVHAEVKVLSSDVRADGFDTDLVVDNSIQQAASGDIHGNAHGSFSWISPEGEHVDIKYVADENGYQPVGAVLPTPPPIPEAIVRALAWLEAHPQAPEHGAHH.

Residues Met1–Ala16 form the signal peptide. The region spanning Ala39 to Pro100 is the Chitin-binding type R&amp;R domain.

Functionally, component of the larval cuticle. The protein is Larval cuticle protein 2 (Lcp2) of Drosophila miranda (Fruit fly).